A 642-amino-acid chain; its full sequence is Threonine--tRNA ligase (642 aa).

Positions 1 to 61 (MPVITLPDGS…ETDAELSIIT (61 aa)) constitute a TGS domain. The segment at 243–534 (DHRKIGKQLD…LIEEYAGRFP (292 aa)) is catalytic. The Zn(2+) site is built by Cys334, His385, and His511.

The protein belongs to the class-II aminoacyl-tRNA synthetase family. As to quaternary structure, homodimer. It depends on Zn(2+) as a cofactor.

The protein resides in the cytoplasm. It catalyses the reaction tRNA(Thr) + L-threonine + ATP = L-threonyl-tRNA(Thr) + AMP + diphosphate + H(+). Its function is as follows. Catalyzes the attachment of threonine to tRNA(Thr) in a two-step reaction: L-threonine is first activated by ATP to form Thr-AMP and then transferred to the acceptor end of tRNA(Thr). Also edits incorrectly charged L-seryl-tRNA(Thr). The protein is Threonine--tRNA ligase of Shewanella sp. (strain ANA-3).